We begin with the raw amino-acid sequence, 124 residues long: Profilin-2 (124 aa).

Belongs to the profilin family. As to quaternary structure, occurs in many kinds of cells as a complex with monomeric actin in a 1:1 ratio. Interacts with forH.

Its subcellular location is the cytoplasm. The protein resides in the cytoskeleton. Its function is as follows. Binds to actin and affects the structure of the cytoskeleton. At high concentrations, profilin prevents the polymerization of actin, whereas it enhances it at low concentrations. By binding to PIP2, it inhibits the formation of IP3 and DG. This Dictyostelium discoideum (Social amoeba) protein is Profilin-2 (proB).